The primary structure comprises 429 residues: MSSSYASSCTKLISLTKQLSSYANQGNHEQALNLFLQMHSSFALPLDAHVFSLALKSCAAAFRPVLGGSVHAHSVKSNFLSNPFVGCALLDMYGKCLSVSHARKLFDEIPQRNAVVWNAMISHYTHCGKVKEAVELYEAMDVMPNESSFNAIIKGLVGTEDGSYRAIEFYRKMIEFRFKPNLITLLALVSACSAIGAFRLIKEIHSYAFRNLIEPHPQLKSGLVEAYGRCGSIVYVQLVFDSMEDRDVVAWSSLISAYALHGDAESALKTFQEMELAKVTPDDIAFLNVLKACSHAGLADEALVYFKRMQGDYGLRASKDHYSCLVDVLSRVGRFEEAYKVIQAMPEKPTAKTWGALLGACRNYGEIELAEIAARELLMVEPENPANYVLLGKIYMSVGRQEEAERLRLKMKESGVKVSPGSSWCLFKD.

PPR repeat units lie at residues 11 to 45 (KLIS…FALP), 47 to 81 (DAHV…NFLS), 82 to 112 (NPFV…IPQR), 113 to 147 (NAVV…PNES), 148 to 180 (SFNA…RFKP), 181 to 215 (NLIT…LIEP), 216 to 246 (HPQL…MEDR), 247 to 281 (DVVA…KVTP), 282 to 312 (DDIA…MQGD), and 318 to 348 (SKDH…MPEK). The tract at residues 353-428 (TWGALLGACR…SPGSSWCLFK (76 aa)) is type E motif.

Belongs to the PPR family. PCMP-E subfamily.

This chain is Putative pentatricopeptide repeat-containing protein At1g03510 (PCMP-E3), found in Arabidopsis thaliana (Mouse-ear cress).